The sequence spans 430 residues: Glutamate-1-semialdehyde 2,1-aminomutase (430 aa).

N6-(pyridoxal phosphate)lysine is present on K265.

Belongs to the class-III pyridoxal-phosphate-dependent aminotransferase family. HemL subfamily. In terms of assembly, homodimer. Pyridoxal 5'-phosphate serves as cofactor.

The protein localises to the cytoplasm. It catalyses the reaction (S)-4-amino-5-oxopentanoate = 5-aminolevulinate. Its pathway is porphyrin-containing compound metabolism; protoporphyrin-IX biosynthesis; 5-aminolevulinate from L-glutamyl-tRNA(Glu): step 2/2. The protein is Glutamate-1-semialdehyde 2,1-aminomutase of Shewanella sp. (strain ANA-3).